The chain runs to 339 residues: Biotin synthase (339 aa).

One can recognise a Radical SAM core domain in the interval 55–282 (NAVQLSTLLS…KAVVRLSAGR (228 aa)). Residues Cys70, Cys74, and Cys77 each contribute to the [4Fe-4S] cluster site. [2Fe-2S] cluster contacts are provided by Cys114, Cys145, Cys205, and Arg277.

It belongs to the radical SAM superfamily. Biotin synthase family. In terms of assembly, homodimer. [4Fe-4S] cluster is required as a cofactor. The cofactor is [2Fe-2S] cluster.

The enzyme catalyses (4R,5S)-dethiobiotin + (sulfur carrier)-SH + 2 reduced [2Fe-2S]-[ferredoxin] + 2 S-adenosyl-L-methionine = (sulfur carrier)-H + biotin + 2 5'-deoxyadenosine + 2 L-methionine + 2 oxidized [2Fe-2S]-[ferredoxin]. It participates in cofactor biosynthesis; biotin biosynthesis; biotin from 7,8-diaminononanoate: step 2/2. Catalyzes the conversion of dethiobiotin (DTB) to biotin by the insertion of a sulfur atom into dethiobiotin via a radical-based mechanism. This Burkholderia orbicola (strain MC0-3) protein is Biotin synthase.